A 369-amino-acid polypeptide reads, in one-letter code: Actin-related protein 2/3 complex subunit 1B-A (369 aa).

WD repeat units lie at residues 6 to 45 (FLLE…WSKI), 50 to 89 (EHNG…WKPT), 94 to 135 (RINR…WVCK), 140 to 179 (PIRS…VEER), 200 to 239 (SSCG…RVTS), 242 to 282 (TDTL…LSFG), and 321 to 364 (LHKN…SAMK).

It belongs to the WD repeat ARPC1 family. Component of the Arp2/3 complex composed of actr2/arp2, actr3/arp3, arpc1 (arpc1a or arpc1b), arpc2, arpc3, arpc4 and arpc5.

The protein resides in the cytoplasm. It localises to the cytoskeleton. Its subcellular location is the nucleus. In terms of biological role, component of the Arp2/3 complex, a multiprotein complex that mediates actin polymerization upon stimulation by nucleation-promoting factor (NPF). The Arp2/3 complex mediates the formation of branched actin networks in the cytoplasm, providing the force for cell motility. In addition to its role in the cytoplasmic cytoskeleton, the Arp2/3 complex also promotes actin polymerization in the nucleus, thereby regulating gene transcription and repair of damaged DNA. The Arp2/3 complex promotes homologous recombination (HR) repair in response to DNA damage by promoting nuclear actin polymerization, leading to drive motility of double-strand breaks (DSBs). This Xenopus laevis (African clawed frog) protein is Actin-related protein 2/3 complex subunit 1B-A (arpc1b-a).